We begin with the raw amino-acid sequence, 229 residues long: Putative 3-methyladenine DNA glycosylase (229 aa).

The protein belongs to the DNA glycosylase MPG family.

The protein is Putative 3-methyladenine DNA glycosylase of Enterococcus faecalis (strain ATCC 700802 / V583).